The primary structure comprises 1000 residues: Kinesin-like protein CIN8 (1000 aa).

Over residues 1–26 (MPAENQNTGQDRSSNSISKNGNSQVG) the composition is skewed to polar residues. A disordered region spans residues 1–28 (MPAENQNTGQDRSSNSISKNGNSQVGCH). One can recognise a Kinesin motor domain in the interval 36 to 477 (NITVAVRCRG…LEYASKAKNI (442 aa)). 128–135 (GMTSTGKT) contacts ATP. Residues 220–242 (ANNTTSNSASSSRSNSRNSSPRS) show a composition bias toward low complexity. Disordered regions lie at residues 220–248 (ANNTTSNSASSSRSNSRNSSPRSLNDLTP) and 260–312 (KSLP…PNDQ). The segment covering 261 to 276 (SLPNTIKQQYQQQQAV) has biased composition (polar residues). Low complexity predominate over residues 277-301 (NSRNNSSSNSGSTTNNASSNTNTNN). The span at 302–312 (GQRSSMAPNDQ) shows a compositional bias: polar residues. Coiled-coil stretches lie at residues 518–615 (MSQD…MALH) and 860–904 (ISVM…IKNS). A disordered region spans residues 970–1000 (VISPKKHAIEDENKSSENVDNEGSRKMLKIE). Serine 972 is subject to Phosphoserine. Basic and acidic residues predominate over residues 976 to 1000 (HAIEDENKSSENVDNEGSRKMLKIE).

It belongs to the TRAFAC class myosin-kinesin ATPase superfamily. Kinesin family. BimC subfamily.

It localises to the cytoplasm. It is found in the cytoskeleton. The protein localises to the spindle. Its subcellular location is the mitochondrion. In terms of biological role, elongates the mitotic spindle by interacting with spindle microtubules to generate an outward force pushing spindle poles apart. Following spindle assembly, CIN8 and KIP1 apparently act to oppose a force, possibly generated by KAR3, that draws separated poles back together. The chain is Kinesin-like protein CIN8 (CIN8) from Saccharomyces cerevisiae (strain ATCC 204508 / S288c) (Baker's yeast).